The following is a 93-amino-acid chain: Pyrimidine/purine nucleoside phosphorylase (93 aa).

The protein belongs to the nucleoside phosphorylase PpnP family.

The enzyme catalyses a purine D-ribonucleoside + phosphate = a purine nucleobase + alpha-D-ribose 1-phosphate. It carries out the reaction adenosine + phosphate = alpha-D-ribose 1-phosphate + adenine. It catalyses the reaction cytidine + phosphate = cytosine + alpha-D-ribose 1-phosphate. The catalysed reaction is guanosine + phosphate = alpha-D-ribose 1-phosphate + guanine. The enzyme catalyses inosine + phosphate = alpha-D-ribose 1-phosphate + hypoxanthine. It carries out the reaction thymidine + phosphate = 2-deoxy-alpha-D-ribose 1-phosphate + thymine. It catalyses the reaction uridine + phosphate = alpha-D-ribose 1-phosphate + uracil. The catalysed reaction is xanthosine + phosphate = alpha-D-ribose 1-phosphate + xanthine. Functionally, catalyzes the phosphorolysis of diverse nucleosides, yielding D-ribose 1-phosphate and the respective free bases. Can use uridine, adenosine, guanosine, cytidine, thymidine, inosine and xanthosine as substrates. Also catalyzes the reverse reactions. The sequence is that of Pyrimidine/purine nucleoside phosphorylase from Pseudoalteromonas atlantica (strain T6c / ATCC BAA-1087).